The sequence spans 1193 residues: Dynamin-like protein A (1193 aa).

The tract at residues 1–609 (MTDQNRKELL…AFRERVKRLE (609 aa)) is D1, associates with and fuses membranes, tethers lipsomes. Residues 50 to 57 (GHYSAGKS) are G1 motif D1. Positions 76–78 (TSA) are G2 motif D1. Residues 141–144 (DTPG) are G3 motif D1. The segment at 199–202 (NQID) is G4 motif D1. Positions 561 to 1193 (MPKSEIKMEQ…WKNSDNTIKM (633 aa)) are D2, does not associate with membranes. The interval 619-626 (GGFSSGKS) is G1 motif D2. The G2 motif D2 stretch occupies residues 645-647 (TTA). The G3 motif D2 stretch occupies residues 774 to 777 (DTPG). A G4 motif D2 region spans residues 837–840 (NAAD).

Belongs to the TRAFAC class dynamin-like GTPase superfamily. Dynamin/Fzo/YdjA family. Homodimer in solution. Both D1 and D2 domains interact with YwpG, YneK interacts only with D1 while RNase Y (rny) only interacts with whole protein. Probably oligomerizes at damaged membrane sites. It depends on Mg(2+) as a cofactor.

It is found in the cell membrane. It carries out the reaction GTP + H2O = GDP + phosphate + H(+). Mediates lipid mixing of vesicles and full mixing of their contents in the absence and presence of GTP. Tethers and mixes small vesicles better than larger ones, indicating a curvature preference. GTP slows down DynA-mediated lipid fusion, perhaps controlling its activity. Prefers phospholipid composition close to the B.subtilis membrane; requires phosphatidylglycerol for fusion has no activity on pure phosphatidylethanolamine vesicles. Regulates membrane lipid diffusion. Required to prevent membrane damage when exposed to low levels of membrane-damaging antibiotics or to bacteriophage. Probably surveys the cell membrane for stress; localizes to sites of membrane damage (treatment with nisin) and forms foci in cells treated with pore-forming compounds (CCCP). May assist membrane repair, possibly by membrane tethering and fusion. Probably functions both in early and late cell division, affects the proper formation of the FtsZ ring. Plays a non-redundant role with flottilin (floT) in membrane dynamics and cell shape. Probably able to bend membranes. Tethers liposomes and mediates their fusion; this does not require GTPase activity or the presence of GTP. Both GTPase domains (dynamin-type G) are required for GTPase activity. In terms of biological role, has intrinsic affinity for membranes and membrane distortion capability; causes tubulation and membrane distortion when expressed in a Drosophila cell line. This chain is Dynamin-like protein A, found in Bacillus subtilis (strain 168).